Here is a 51-residue protein sequence, read N- to C-terminus: Small ribosomal subunit protein eS31 (51 aa).

4 residues coordinate Zn(2+): cysteine 22, cysteine 25, cysteine 40, and cysteine 43. The C4-type zinc finger occupies 22-43; that stretch reads CVRCSHGIFMADHGDRYACGRC.

This sequence belongs to the eukaryotic ribosomal protein eS31 family. As to quaternary structure, part of the 30S ribosomal subunit. Zn(2+) serves as cofactor.

The protein is Small ribosomal subunit protein eS31 of Methanosphaera stadtmanae (strain ATCC 43021 / DSM 3091 / JCM 11832 / MCB-3).